A 354-amino-acid chain; its full sequence is Inactive ADP-ribosyltransferase ARH2 (354 aa).

Ser27 carries the post-translational modification Phosphoserine.

The protein belongs to the ADP-ribosylglycohydrolase family.

The protein localises to the cytoplasm. Its subcellular location is the myofibril. The protein resides in the sarcomere. In terms of biological role, required for myofibril assembly and outgrowth of the cardiac chambers in the developing heart. Appears to be catalytically inactive, showing no activity against O-acetyl-ADP-ribose. In Pongo abelii (Sumatran orangutan), this protein is Inactive ADP-ribosyltransferase ARH2 (ADPRHL1).